Consider the following 299-residue polypeptide: MKRQLEAYCAHLRNERQVSEHTLLGYRRDLEKVIAYCKEHGIAEWQALQIQQLRQLIARLHHHGQSPRSLARLLSAVRGLYRYLNREGLCQHDPATGLSAPKGERRLPKVLDTDRALQLLDGGVDDDFIARRDQAILELFYSSGLRLSELTNLDLDHLDLAAGLVQVLGKGGKARVLPVGRKAREALQAWYRLRGIGNPRDRAVFITRQGNRISPQAVRLRVKAAGERELGQHLHPHMLRHSFASHVLESSQDLRAVQEMLGHADISTTQIYTHLDFQHLAAVYDSAHPRAKRSKGTDS.

Residues 1–85 (MKRQLEAYCA…AVRGLYRYLN (85 aa)) enclose the Core-binding (CB) domain. The Tyr recombinase domain occupies 106–285 (RLPKVLDTDR…DFQHLAAVYD (180 aa)). Residues R146, K170, H237, R240, and H263 contribute to the active site. Y272 (O-(3'-phospho-DNA)-tyrosine intermediate) is an active-site residue.

It belongs to the 'phage' integrase family. XerC subfamily. In terms of assembly, forms a cyclic heterotetrameric complex composed of two molecules of XerC and two molecules of XerD.

The protein resides in the cytoplasm. Its function is as follows. Site-specific tyrosine recombinase, which acts by catalyzing the cutting and rejoining of the recombining DNA molecules. The XerC-XerD complex is essential to convert dimers of the bacterial chromosome into monomers to permit their segregation at cell division. It also contributes to the segregational stability of plasmids. The chain is Tyrosine recombinase XerC from Pseudomonas putida (strain ATCC 700007 / DSM 6899 / JCM 31910 / BCRC 17059 / LMG 24140 / F1).